Consider the following 140-residue polypeptide: Holo-[acyl-carrier-protein] synthase (140 aa).

Mg(2+)-binding residues include Asp7 and Glu58.

Belongs to the P-Pant transferase superfamily. AcpS family. The cofactor is Mg(2+).

The protein localises to the cytoplasm. It catalyses the reaction apo-[ACP] + CoA = holo-[ACP] + adenosine 3',5'-bisphosphate + H(+). Functionally, transfers the 4'-phosphopantetheine moiety from coenzyme A to a Ser of acyl-carrier-protein. The protein is Holo-[acyl-carrier-protein] synthase of Chloroflexus aggregans (strain MD-66 / DSM 9485).